Consider the following 254-residue polypeptide: SLA class II histocompatibility antigen, DQ haplotype C alpha chain (254 aa).

Positions 1 to 23 are cleaved as a signal peptide; the sequence is MVPGRVLMWGALALTTVMSACGG. The tract at residues 24 to 120 is alpha-1; that stretch reads EDIAADHVAS…KVPEVTVFSK (97 aa). At 24–216 the chain is on the extracellular side; that stretch reads EDIAADHVAS…IPAPMSELTE (193 aa). N-linked (GlcNAc...) asparagine glycans are attached at residues asparagine 104 and asparagine 144. Residues 113–204 form the Ig-like C1-type domain; the sequence is PEVTVFSKSP…LDKPLLKHWE (92 aa). Residues 121–203 are alpha-2; sequence SPVILGQPNT…GLDKPLLKHW (83 aa). An intrachain disulfide couples cysteine 133 to cysteine 188. The connecting peptide stretch occupies residues 204–216; sequence EPEIPAPMSELTE. A helical membrane pass occupies residues 217–239; that stretch reads TVVCALGLIVGLVGIVVGTVFII. Over 240-254 the chain is Cytoplasmic; the sequence is QGLRSGGPSRHQGSL.

It belongs to the MHC class II family.

It localises to the membrane. This is SLA class II histocompatibility antigen, DQ haplotype C alpha chain from Sus scrofa (Pig).